Here is a 230-residue protein sequence, read N- to C-terminus: Orotidine 5'-phosphate decarboxylase (230 aa).

Residues D11, K34, 61-70 (DLKLHDIPNT), T117, R179, Q188, G208, and R209 contribute to the substrate site. Residue K63 is the Proton donor of the active site.

It belongs to the OMP decarboxylase family. Type 1 subfamily. As to quaternary structure, homodimer.

The enzyme catalyses orotidine 5'-phosphate + H(+) = UMP + CO2. Its pathway is pyrimidine metabolism; UMP biosynthesis via de novo pathway; UMP from orotate: step 2/2. Catalyzes the decarboxylation of orotidine 5'-monophosphate (OMP) to uridine 5'-monophosphate (UMP). The sequence is that of Orotidine 5'-phosphate decarboxylase from Streptococcus pyogenes serotype M49 (strain NZ131).